Consider the following 345-residue polypeptide: MSTPTPLSYKDAGVDIDAGNALVSNIKAAVKRTRRPEVMGNLGGFGALCEIPTKYKQPVLVSGTDGVGTKLRLAIDYKKHDTVGIDLVAMCVNDLIVQGAEPLFFLDYYATGKLDVETATSVVNGIGEGCFQSGCALIGGETAEMPGMYEGEDYDLAGFCVGVVEKADIIDGSKVAAGDALIALASSGPHSNGYSLVRKVLEVSQADPQQDLNGKPLIEHLLEPTKIYVKSLLKLIAASDVHAMAHITGGGFWENIPRVLPDNLKAVIQGDSWQWPAVFSWLMENGNIAEYEMYRTFNCGVGMLVALPADKVDAALSLLAAEGEQAWLIGAIADREGNEEQVEIL.

It belongs to the AIR synthase family.

The protein localises to the cytoplasm. The enzyme catalyses 2-formamido-N(1)-(5-O-phospho-beta-D-ribosyl)acetamidine + ATP = 5-amino-1-(5-phospho-beta-D-ribosyl)imidazole + ADP + phosphate + H(+). The protein operates within purine metabolism; IMP biosynthesis via de novo pathway; 5-amino-1-(5-phospho-D-ribosyl)imidazole from N(2)-formyl-N(1)-(5-phospho-D-ribosyl)glycinamide: step 2/2. This chain is Phosphoribosylformylglycinamidine cyclo-ligase, found in Shewanella baltica (strain OS185).